The sequence spans 347 residues: MLHTTQLYQHVPETRWPIVYSPRYNITFMGLEKLHPFDAGKWGKVINFLKEEKLLSDSMLVEAREASEEDLLVVHTRRYLNELKWSFAVATITEIPPVIFLPNFLVQRKVLRPLRTQTGGTIMAGKLAVERGWAINVGGGFHHCSSDRGGGFCAYADITLAIKFLFERVEGISRATIIDLDAHQGNGHERDFMDDKRVYIMDVYNRHIYPGDRFAKQAIRRKVELEWGTEDDEYLDKVERNIKKSLQEHLPDVVVYNAGTDILEGDRLGGLSISPAGIVKRDELVFRMVRGRRVPILMVTSGGYQKRTARIIADSILNLFGLGLIGPESPSVSAQNSDTPLLPPAVP.

The segment at 14 to 326 is histone deacetylase; sequence TRWPIVYSPR…LNLFGLGLIG (313 aa). His-143 is an active-site residue.

The protein belongs to the histone deacetylase family. Interacts with HDAC6. In terms of tissue distribution, weakly expressed in most tissues. Strongly expressed in brain, heart, skeletal muscle, kidney and testis.

The protein resides in the nucleus. It catalyses the reaction N(6)-acetyl-L-lysyl-[histone] + H2O = L-lysyl-[histone] + acetate. In terms of biological role, responsible for the deacetylation of lysine residues on the N-terminal part of the core histones (H2A, H2B, H3 and H4). Histone deacetylation gives a tag for epigenetic repression and plays an important role in transcriptional regulation, cell cycle progression and developmental events. Histone deacetylases act via the formation of large multiprotein complexes. This is Histone deacetylase 11 (HDAC11) from Homo sapiens (Human).